We begin with the raw amino-acid sequence, 51 residues long: Light-harvesting protein B800/850/890 beta-2 chain (51 aa).

Residues 1-17 (ADEMRNVSDEEAKEFHA) lie on the Cytoplasmic side of the membrane. His16 and His34 together coordinate a bacteriochlorophyll. The helical transmembrane segment at 18 to 40 (MFSQAFTVYVGVAVVAHILAWAW) threads the bilayer. Topologically, residues 41–51 (RPWIPGDEGFG) are periplasmic.

This sequence belongs to the antenna complex beta subunit family. In terms of assembly, the core complex is formed by different alpha and beta chains, binding bacteriochlorophyll molecules, and arranged most probably in tetrameric structures disposed around the reaction center. The non-pigmented gamma chains may constitute additional components.

It localises to the cell inner membrane. Functionally, antenna complexes are light-harvesting systems, which transfer the excitation energy to the reaction centers. This is Light-harvesting protein B800/850/890 beta-2 chain from Halorhodospira halophila (strain DSM 244 / SL1) (Ectothiorhodospira halophila (strain DSM 244 / SL1)).